An 801-amino-acid polypeptide reads, in one-letter code: Protein SDA1 homolog (801 aa).

Disordered stretches follow at residues 1–40 (MGKV…ASRF), 495–517 (RKDR…FARP), 536–647 (GEQG…SKNS), and 739–801 (DYKF…RKPQ). Over residues 24-40 (KSNAPTEGSNSGKASRF) the composition is skewed to polar residues. Acidic residues-rich tracts occupy residues 544–568 (DGTD…DADE) and 583–633 (NDAE…EASE). 2 stretches are compositionally biased toward basic residues: residues 770-779 (NKIRGRNRQR) and 787-801 (SLRH…RKPQ).

It belongs to the SDA1 family.

The protein localises to the nucleus. In terms of biological role, required for 60S pre-ribosomal subunits export to the cytoplasm. Required for normal somatic gonad development and for regulation of germline development and proliferation. The protein is Protein SDA1 homolog (pro-3) of Caenorhabditis elegans.